The following is a 600-amino-acid chain: Probable methyltransferase PMT7 (600 aa).

The Cytoplasmic portion of the chain corresponds to 1–15 (MGGGYVLFGSARSGQ). Residues 16–36 (MIMVALVLMVGSFYAGSIFGN) form a helical; Signal-anchor for type II membrane protein membrane-spanning segment. Over 37-600 (NSPIYISQPS…FCRKKFWAIL (564 aa)) the chain is Lumenal. N-linked (GlcNAc...) asparagine glycans are attached at residues asparagine 49, asparagine 98, asparagine 110, asparagine 157, asparagine 200, asparagine 204, asparagine 334, asparagine 447, and asparagine 484.

Belongs to the methyltransferase superfamily.

Its subcellular location is the golgi apparatus membrane. This chain is Probable methyltransferase PMT7, found in Arabidopsis thaliana (Mouse-ear cress).